The primary structure comprises 1446 residues: Major viral transcription factor ICP4 homolog (1446 aa).

Disordered stretches follow at residues 25 to 59, 73 to 493, 801 to 987, and 1385 to 1446; these read AEEE…GGLF, AAAG…PPAD, PGPA…HTPR, and THRP…LLLR. Residues 73–94 are compositionally biased toward low complexity; it reads AAAGATRPPRPPSAQQQQQPRR. Positions 101–112 are enriched in acidic residues; the sequence is VLDDEDEEEDEP. Composition is skewed to low complexity over residues 166–189 and 216–241; these read RSSP…APRR and PAAV…PVSA. Basic and acidic residues predominate over residues 262–277; sequence REPLLDEPAAARRLDP. 2 stretches are compositionally biased toward low complexity: residues 284 to 306 and 345 to 397; these read SPVS…ETVA and GFSS…SSSS. The segment covering 415–426 has biased composition (pro residues); it reads GPPPSPPAPAAA. Residues 427–442 show a composition bias toward low complexity; the sequence is PRPSASSASSSAAASP. Positions 803–815 are enriched in pro residues; it reads PAEPAPGLPPLWP. Residues 827 to 877 show a composition bias toward low complexity; it reads PAAAGAPSGLPGSGPSSPASTKSSSSTKSSSSTKSGLSGSSGYASSPAAGP. Residues 883–892 are compositionally biased toward basic residues; sequence RRKKKRRAPG. A compositionally biased stretch (low complexity) spans 933–952; it reads LGLGPAPDPAPALLSSSSSS.

It belongs to the herpesviridae ICP4 family. A long stretch of serine residues may be a major site of phosphorylation.

The protein resides in the host nucleus. Its function is as follows. This IE protein is a multifunctional protein capable of migrating to the nucleus, binding to DNA, trans-activating other viral genes, and autoregulating its own synthesis. This Suid herpesvirus 1 (strain Kaplan) (SuHV-1) protein is Major viral transcription factor ICP4 homolog (IE).